The following is a 447-amino-acid chain: Tryptophan synthase beta chain (447 aa).

Lys92 bears the N6-(pyridoxal phosphate)lysine mark. Residues 408–447 (GLAVKGGEQPKEFSDGPPLGKLAPSGGSAVREATSVGARK) form a disordered region.

The protein belongs to the TrpB family. Tetramer of two alpha and two beta chains. The cofactor is pyridoxal 5'-phosphate.

The catalysed reaction is (1S,2R)-1-C-(indol-3-yl)glycerol 3-phosphate + L-serine = D-glyceraldehyde 3-phosphate + L-tryptophan + H2O. The protein operates within amino-acid biosynthesis; L-tryptophan biosynthesis; L-tryptophan from chorismate: step 5/5. Functionally, the beta subunit is responsible for the synthesis of L-tryptophan from indole and L-serine. The sequence is that of Tryptophan synthase beta chain from Polaromonas sp. (strain JS666 / ATCC BAA-500).